A 182-amino-acid chain; its full sequence is Adenine phosphoribosyltransferase (182 aa).

It belongs to the purine/pyrimidine phosphoribosyltransferase family. In terms of assembly, homodimer.

It localises to the cytoplasm. The catalysed reaction is AMP + diphosphate = 5-phospho-alpha-D-ribose 1-diphosphate + adenine. It functions in the pathway purine metabolism; AMP biosynthesis via salvage pathway; AMP from adenine: step 1/1. In terms of biological role, catalyzes a salvage reaction resulting in the formation of AMP, that is energically less costly than de novo synthesis. The chain is Adenine phosphoribosyltransferase from Campylobacter concisus (strain 13826).